The chain runs to 246 residues: Large ribosomal subunit protein uL2 (246 aa).

Positions 196–226 (MSPYAHPHGGGSHQKGGTPVPKTAPPGQKVG) are disordered.

The protein belongs to the universal ribosomal protein uL2 family. Part of the 50S ribosomal subunit. Forms a bridge to the 30S subunit in the 70S ribosome.

Its function is as follows. One of the primary rRNA binding proteins. Required for association of the 30S and 50S subunits to form the 70S ribosome, for tRNA binding and peptide bond formation. It has been suggested to have peptidyltransferase activity; this is somewhat controversial. Makes several contacts with the 16S rRNA in the 70S ribosome. The protein is Large ribosomal subunit protein uL2 of Pyrobaculum arsenaticum (strain DSM 13514 / JCM 11321 / PZ6).